Here is a 175-residue protein sequence, read N- to C-terminus: Large ribosomal subunit protein bL17m (175 aa).

The transit peptide at 1 to 8 (MRLSVAAA) directs the protein to the mitochondrion. The disordered stretch occupies residues 155 to 175 (DLRQSQEASNHSSHTAQTPGI). The segment covering 161–175 (EASNHSSHTAQTPGI) has biased composition (polar residues).

This sequence belongs to the bacterial ribosomal protein bL17 family. In terms of assembly, component of the mitochondrial large ribosomal subunit (mt-LSU). Mature mammalian 55S mitochondrial ribosomes consist of a small (28S) and a large (39S) subunit. The 28S small subunit contains a 12S ribosomal RNA (12S mt-rRNA) and 30 different proteins. The 39S large subunit contains a 16S rRNA (16S mt-rRNA), a copy of mitochondrial valine transfer RNA (mt-tRNA(Val)), which plays an integral structural role, and 52 different proteins. Detected in adrenal gland, mammary gland and adipose tissue.

The protein resides in the mitochondrion. This Homo sapiens (Human) protein is Large ribosomal subunit protein bL17m (MRPL17).